Consider the following 425-residue polypeptide: Protein cab-1 (425 aa).

The segment covering 1–11 (MRYTFSDEKKA) has biased composition (basic and acidic residues). Disordered stretches follow at residues 1–20 (MRYT…SRAK) and 214–251 (LKKT…VPQK). The interval 205–424 (ENEIAKESEL…EVCNPNFAAQ (220 aa)) is AEX-3-binding. Residues 300–320 (LLLLAVGTVMCVGLIGTVAGG) form a helical membrane-spanning segment. Residues 334–355 (DDGEYAPYAGTGPGFRKNKGNK) form a disordered region.

Belongs to the NPDC1/cab-1 family. In terms of assembly, binds to the RAB3 GDP/GTP exchange factor aex-3. As to expression, expressed in a variety of neurons.

Its subcellular location is the membrane. This is Protein cab-1 (cab-1) from Caenorhabditis elegans.